Consider the following 185-residue polypeptide: Elongation factor P (185 aa).

It belongs to the elongation factor P family.

It is found in the cytoplasm. It functions in the pathway protein biosynthesis; polypeptide chain elongation. Functionally, involved in peptide bond synthesis. Stimulates efficient translation and peptide-bond synthesis on native or reconstituted 70S ribosomes in vitro. Probably functions indirectly by altering the affinity of the ribosome for aminoacyl-tRNA, thus increasing their reactivity as acceptors for peptidyl transferase. This is Elongation factor P from Carboxydothermus hydrogenoformans (strain ATCC BAA-161 / DSM 6008 / Z-2901).